A 414-amino-acid chain; its full sequence is Glutamyl-tRNA reductase (414 aa).

Residues 47–50 (TCNR), S106, 111–113 (EAQ), and Q117 each bind substrate. C48 (nucleophile) is an active-site residue. 185–190 (GAGRTG) contacts NADP(+).

The protein belongs to the glutamyl-tRNA reductase family. Homodimer.

It catalyses the reaction (S)-4-amino-5-oxopentanoate + tRNA(Glu) + NADP(+) = L-glutamyl-tRNA(Glu) + NADPH + H(+). It participates in porphyrin-containing compound metabolism; protoporphyrin-IX biosynthesis; 5-aminolevulinate from L-glutamyl-tRNA(Glu): step 1/2. Catalyzes the NADPH-dependent reduction of glutamyl-tRNA(Glu) to glutamate 1-semialdehyde (GSA). This Herpetosiphon aurantiacus (strain ATCC 23779 / DSM 785 / 114-95) protein is Glutamyl-tRNA reductase.